An 89-amino-acid polypeptide reads, in one-letter code: Small ribosomal subunit protein uS15 (89 aa).

This sequence belongs to the universal ribosomal protein uS15 family. As to quaternary structure, part of the 30S ribosomal subunit. Forms a bridge to the 50S subunit in the 70S ribosome, contacting the 23S rRNA.

Functionally, one of the primary rRNA binding proteins, it binds directly to 16S rRNA where it helps nucleate assembly of the platform of the 30S subunit by binding and bridging several RNA helices of the 16S rRNA. Forms an intersubunit bridge (bridge B4) with the 23S rRNA of the 50S subunit in the ribosome. This Yersinia pseudotuberculosis serotype O:1b (strain IP 31758) protein is Small ribosomal subunit protein uS15.